A 498-amino-acid chain; its full sequence is Neoxanthin synthase, chloroplastic (498 aa).

A chloroplast-targeting transit peptide spans 1–33; the sequence is METLLKPLTSLLLSSPTPHRSIFQQNPPSLNPT. The tract at residues 16–38 is disordered; the sequence is PTPHRSIFQQNPPSLNPTTKKKS. Positions 22-33 are enriched in polar residues; it reads IFQQNPPSLNPT. 84-112 contacts NAD(+); sequence VIIIGAGPAGLRLAEHVSKYGIKVCCVDP.

This sequence belongs to the lycopene cyclase family.

The protein localises to the plastid. Its subcellular location is the chloroplast. The catalysed reaction is all-trans-violaxanthin = all-trans-neoxanthin. It participates in carotenoid biosynthesis; neoxanthin biosynthesis. Involved in the synthesis of neoxanthin, the last product of carotenoid synthesis and a precursor of abscisic acid. The polypeptide is Neoxanthin synthase, chloroplastic (NXS) (Solanum tuberosum (Potato)).